Consider the following 114-residue polypeptide: Fumarate reductase subunit D (114 aa).

The next 3 helical transmembrane spans lie at Val-24–Leu-44, Leu-50–Pro-70, and Gly-92–Ile-112.

The protein belongs to the FrdD family. In terms of assembly, part of an enzyme complex containing four subunits: a flavoprotein (FrdA), an iron-sulfur protein (FrdB), and two hydrophobic anchor proteins (FrdC and FrdD).

It localises to the cell inner membrane. Its function is as follows. Anchors the catalytic components of the fumarate reductase complex to the cell membrane, binds quinones. In Haemophilus influenzae (strain 86-028NP), this protein is Fumarate reductase subunit D.